The sequence spans 388 residues: Splicing factor 3B subunit 4 (388 aa).

RRM domains lie at 13 to 91 (ATIY…KASA) and 100 to 179 (ANIF…YAFK). The tract at residues 244–388 (QPPPLMGMAQ…GMIPPPPPPS (145 aa)) is disordered. Pro residues-rich tracts occupy residues 261-325 (PPVP…PSRF), 333-355 (MPPPPPPGMRYPGGMPPPPPPRY), and 362-388 (MYPPPPPSRPPAPPSGHGMIPPPPPPS).

This sequence belongs to the SF3B4 family.

The protein localises to the nucleus. Subunit of the splicing factor SF3B required for 'A' complex assembly formed by the stable binding of U2 snRNP to the branchpoint sequence (BPS) in pre-mRNA. Sequence independent binding of SF3A/SF3B complex upstream of the branch site is essential, it may anchor U2 snRNP to the pre-mRNA. May also be involved in the assembly of the 'E' complex. SF3B4 has been found in complex 'B' and 'C' as well. Belongs also to the minor U12-dependent spliceosome, which is involved in the splicing of rare class of nuclear pre-mRNA intron. This chain is Splicing factor 3B subunit 4 (sap-49), found in Caenorhabditis elegans.